Reading from the N-terminus, the 181-residue chain is ATP-dependent protease subunit HslV (181 aa).

Residue Thr11 is part of the active site. Ala166, Cys169, and Thr172 together coordinate Na(+).

The protein belongs to the peptidase T1B family. HslV subfamily. In terms of assembly, a double ring-shaped homohexamer of HslV is capped on each side by a ring-shaped HslU homohexamer. The assembly of the HslU/HslV complex is dependent on binding of ATP.

The protein localises to the cytoplasm. It carries out the reaction ATP-dependent cleavage of peptide bonds with broad specificity.. With respect to regulation, allosterically activated by HslU binding. In terms of biological role, protease subunit of a proteasome-like degradation complex believed to be a general protein degrading machinery. The protein is ATP-dependent protease subunit HslV of Chlorobaculum tepidum (strain ATCC 49652 / DSM 12025 / NBRC 103806 / TLS) (Chlorobium tepidum).